The chain runs to 231 residues: Phosphoribosylformylglycinamidine synthase subunit PurQ (231 aa).

Positions 3-231 (FGVLIFPGSN…ESMVGAMAKR (229 aa)) constitute a Glutamine amidotransferase type-1 domain. Catalysis depends on cysteine 86, which acts as the Nucleophile. Active-site residues include histidine 203 and glutamate 205.

As to quaternary structure, part of the FGAM synthase complex composed of 1 PurL, 1 PurQ and 2 PurS subunits.

Its subcellular location is the cytoplasm. The enzyme catalyses N(2)-formyl-N(1)-(5-phospho-beta-D-ribosyl)glycinamide + L-glutamine + ATP + H2O = 2-formamido-N(1)-(5-O-phospho-beta-D-ribosyl)acetamidine + L-glutamate + ADP + phosphate + H(+). It carries out the reaction L-glutamine + H2O = L-glutamate + NH4(+). The protein operates within purine metabolism; IMP biosynthesis via de novo pathway; 5-amino-1-(5-phospho-D-ribosyl)imidazole from N(2)-formyl-N(1)-(5-phospho-D-ribosyl)glycinamide: step 1/2. Its function is as follows. Part of the phosphoribosylformylglycinamidine synthase complex involved in the purines biosynthetic pathway. Catalyzes the ATP-dependent conversion of formylglycinamide ribonucleotide (FGAR) and glutamine to yield formylglycinamidine ribonucleotide (FGAM) and glutamate. The FGAM synthase complex is composed of three subunits. PurQ produces an ammonia molecule by converting glutamine to glutamate. PurL transfers the ammonia molecule to FGAR to form FGAM in an ATP-dependent manner. PurS interacts with PurQ and PurL and is thought to assist in the transfer of the ammonia molecule from PurQ to PurL. The protein is Phosphoribosylformylglycinamidine synthase subunit PurQ of Koribacter versatilis (strain Ellin345).